Reading from the N-terminus, the 313-residue chain is Ribose 1,5-bisphosphate isomerase (313 aa).

Residues 17-20 and arginine 57 contribute to the substrate site; that span reads RGAA. Cysteine 121 (proton acceptor) is an active-site residue. Aspartate 190 functions as the Proton donor in the catalytic mechanism. Residues 200-201 and lysine 226 each bind substrate; that span reads NK.

It belongs to the eIF-2B alpha/beta/delta subunits family. R15P isomerase subfamily.

It carries out the reaction alpha-D-ribose 1,5-bisphosphate = D-ribulose 1,5-bisphosphate. Its function is as follows. Catalyzes the isomerization of ribose 1,5-bisphosphate (R15P) to ribulose 1,5-bisphosphate (RuBP), the CO(2) acceptor and substrate for RubisCO. Functions in an archaeal AMP degradation pathway, together with AMP phosphorylase and RubisCO. This chain is Ribose 1,5-bisphosphate isomerase, found in Archaeoglobus fulgidus (strain ATCC 49558 / DSM 4304 / JCM 9628 / NBRC 100126 / VC-16).